The primary structure comprises 496 residues: L-arabinose isomerase (496 aa).

Glu302, Glu329, His346, and His445 together coordinate Mn(2+).

The protein belongs to the arabinose isomerase family. Requires Mn(2+) as cofactor.

It catalyses the reaction beta-L-arabinopyranose = L-ribulose. It functions in the pathway carbohydrate degradation; L-arabinose degradation via L-ribulose; D-xylulose 5-phosphate from L-arabinose (bacterial route): step 1/3. Functionally, catalyzes the conversion of L-arabinose to L-ribulose. In Thermotoga maritima (strain ATCC 43589 / DSM 3109 / JCM 10099 / NBRC 100826 / MSB8), this protein is L-arabinose isomerase.